We begin with the raw amino-acid sequence, 209 residues long: Kynurenine formamidase (209 aa).

Trp19 is a binding site for substrate. 3 residues coordinate Zn(2+): His49, His53, and Asp55. The Proton donor/acceptor role is filled by His59. Residues His160 and Glu172 each coordinate Zn(2+).

Belongs to the Cyclase 1 superfamily. KynB family. Homodimer. It depends on Zn(2+) as a cofactor.

It catalyses the reaction N-formyl-L-kynurenine + H2O = L-kynurenine + formate + H(+). The protein operates within amino-acid degradation; L-tryptophan degradation via kynurenine pathway; L-kynurenine from L-tryptophan: step 2/2. Catalyzes the hydrolysis of N-formyl-L-kynurenine to L-kynurenine, the second step in the kynurenine pathway of tryptophan degradation. The chain is Kynurenine formamidase from Ralstonia nicotianae (strain ATCC BAA-1114 / GMI1000) (Ralstonia solanacearum).